A 655-amino-acid polypeptide reads, in one-letter code: FYVE, RhoGEF and PH domain-containing protein 2 (655 aa).

3 positions are modified to phosphoserine: serine 10, serine 39, and serine 47. Disordered regions lie at residues 21 to 52 (NRTP…EPWE) and 84 to 103 (WRRS…EPEE). The segment covering 32–41 (SLEDQPHSPE) has biased composition (basic and acidic residues). Residues 102–290 (EEKRVVRELL…FSAAQHSNAA (189 aa)) enclose the DH domain. Residues 319-418 (TLLREGPVLK…WMQACQAAID (100 aa)) enclose the PH 1 domain. The FYVE-type zinc-finger motif lies at 458–518 (DKMVTMCMRC…VCLTCYTFLT (61 aa)). Zn(2+) is bound by residues cysteine 464, cysteine 467, cysteine 481, cysteine 484, cysteine 489, cysteine 492, cysteine 510, and cysteine 513. The PH 2 domain occupies 544–641 (QSLVCSFLQL…WVTAIKRAAS (98 aa)). Threonine 644 is subject to Phosphothreonine. Residue serine 654 is modified to Phosphoserine.

Lymph node, spleen, B-lymphocytes and macrophages (at protein level). Expressed at high levels in lymph node, spleen, B-lymphocytes and bone marrow macrophages. Expressed at lower levels in mature bone marrow dendritic cells. In both immature and mature B-cells, expression is down-regulated by prior B-cell receptor signaling. Expression remains high in resting B and memory cells but declines upon differentiation into plasma cells.

The protein localises to the cytoplasm. Its subcellular location is the nucleus. It localises to the early endosome. The protein resides in the early endosome membrane. It is found in the cell projection. The protein localises to the ruffle membrane. Its subcellular location is the cytoskeleton. Activates CDC42, a member of the Ras-like family of Rho- and Rac proteins, by exchanging bound GDP for free GTP. Activates JNK1 via CDC42 but not RAC1. Binds to phosphatidylinositol 4,5-bisphosphate, phosphatidylinositol 3,4,5-trisphosphate, phosphatidylinositol 5-monophosphate, phosphatidylinositol 4-monophosphate and phosphatidylinositol 3-monophosphate. The protein is FYVE, RhoGEF and PH domain-containing protein 2 (Fgd2) of Mus musculus (Mouse).